Reading from the N-terminus, the 158-residue chain is uncharacterized protein (158 aa).

The disordered stretch occupies residues 77-132 (AIKRNKIGGSKRSEVHSNRSKNYSSKKFRSQKCRRSRQKKRQNKKPNNSRFISSNK). Basic residues predominate over residues 100–120 (SSKKFRSQKCRRSRQKKRQNK).

This is an uncharacterized protein from Acanthamoeba polyphaga mimivirus (APMV).